Here is a 382-residue protein sequence, read N- to C-terminus: GDSL esterase/lipase At4g01130 (382 aa).

The signal sequence occupies residues 1–28; the sequence is MASDINRRRSFSLLVLIIVMLYGHKGDS. Residue serine 41 is the Nucleophile of the active site. N-linked (GlcNAc...) asparagine glycans are attached at residues asparagine 118, asparagine 263, asparagine 275, and asparagine 330. Residues aspartate 348 and histidine 351 contribute to the active site.

This sequence belongs to the 'GDSL' lipolytic enzyme family.

It localises to the secreted. This Arabidopsis thaliana (Mouse-ear cress) protein is GDSL esterase/lipase At4g01130.